We begin with the raw amino-acid sequence, 389 residues long: Phospho-N-acetylmuramoyl-pentapeptide-transferase (389 aa).

11 helical membrane passes run 21 to 41 (YITMRAVLACATALLIGLVAG), 71 to 91 (TPTMGGALILIAVAISTLLWA), 97 to 117 (FVWVVLLVTFGFGWIGWMDDY), 134 to 154 (FFWQATIGLVAAVYLAFAVSA), 167 to 187 (WVSSGFAMPLPTRADLIVPFF), 190 to 210 (VSYPLGVLGFVALTWAVIVGT), 222 to 242 (GLAIMPTVMVGSALGIFAYVV), 259 to 279 (AAELMVLCAAIAGAGLAFLWF), 286 to 306 (VFMGDVGALALGGALGTIAVI), 311 to 331 (IVLFIMGGVFVVETLSVMMQV), and 366 to 386 (QVVVRFWIISMMLVLIGLSTL).

This sequence belongs to the glycosyltransferase 4 family. MraY subfamily. The cofactor is Mg(2+).

It localises to the cell inner membrane. It carries out the reaction UDP-N-acetyl-alpha-D-muramoyl-L-alanyl-gamma-D-glutamyl-meso-2,6-diaminopimeloyl-D-alanyl-D-alanine + di-trans,octa-cis-undecaprenyl phosphate = di-trans,octa-cis-undecaprenyl diphospho-N-acetyl-alpha-D-muramoyl-L-alanyl-D-glutamyl-meso-2,6-diaminopimeloyl-D-alanyl-D-alanine + UMP. The protein operates within cell wall biogenesis; peptidoglycan biosynthesis. In terms of biological role, catalyzes the initial step of the lipid cycle reactions in the biosynthesis of the cell wall peptidoglycan: transfers peptidoglycan precursor phospho-MurNAc-pentapeptide from UDP-MurNAc-pentapeptide onto the lipid carrier undecaprenyl phosphate, yielding undecaprenyl-pyrophosphoryl-MurNAc-pentapeptide, known as lipid I. The polypeptide is Phospho-N-acetylmuramoyl-pentapeptide-transferase (Bordetella petrii (strain ATCC BAA-461 / DSM 12804 / CCUG 43448)).